Here is a 423-residue protein sequence, read N- to C-terminus: Amino sugar nitrososynthase RubN8 (423 aa).

This sequence belongs to the acyl-CoA dehydrogenase family. The cofactor is FAD.

The protein operates within antibiotic biosynthesis. Functionally, nitrososynthase involved in the biosynthesis of rubradirin, an ansamycin antibiotic. In vitro, catalyzes the double-oxidation of TDP-L-epi-vancosamine to TDP-L-epi-vancosonitrose. In vivo, probably catalyzes the formation of D-rubranitrose, the nitro sugar moiety of rubradirin. In Streptomyces rubradiris (Streptomyces achromogenes subsp. rubradiris), this protein is Amino sugar nitrososynthase RubN8.